The sequence spans 461 residues: Adenosylmethionine-8-amino-7-oxononanoate aminotransferase (461 aa).

Position 117 to 118 (Gly-117 to Ala-118) interacts with pyridoxal 5'-phosphate. Tyr-150 provides a ligand contact to substrate. A pyridoxal 5'-phosphate-binding site is contributed by Asp-263. Substrate contacts are provided by Lys-296, Gly-331, and Arg-426. Lys-296 is modified (N6-(pyridoxal phosphate)lysine).

The protein belongs to the class-III pyridoxal-phosphate-dependent aminotransferase family. BioA subfamily. Homodimer. Pyridoxal 5'-phosphate is required as a cofactor.

It is found in the cytoplasm. It carries out the reaction (8S)-8-amino-7-oxononanoate + S-adenosyl-L-methionine = S-adenosyl-4-methylsulfanyl-2-oxobutanoate + (7R,8S)-7,8-diammoniononanoate. The protein operates within cofactor biosynthesis; biotin biosynthesis; 7,8-diaminononanoate from 8-amino-7-oxononanoate (SAM route): step 1/1. Catalyzes the transfer of the alpha-amino group from S-adenosyl-L-methionine (SAM) to 7-keto-8-aminopelargonic acid (KAPA) to form 7,8-diaminopelargonic acid (DAPA). It is the only aminotransferase known to utilize SAM as an amino donor. This chain is Adenosylmethionine-8-amino-7-oxononanoate aminotransferase, found in Methanocaldococcus jannaschii (strain ATCC 43067 / DSM 2661 / JAL-1 / JCM 10045 / NBRC 100440) (Methanococcus jannaschii).